A 101-amino-acid chain; its full sequence is Urease subunit beta (101 aa).

Belongs to the urease beta subunit family. Heterotrimer of UreA (gamma), UreB (beta) and UreC (alpha) subunits. Three heterotrimers associate to form the active enzyme.

The protein resides in the cytoplasm. It catalyses the reaction urea + 2 H2O + H(+) = hydrogencarbonate + 2 NH4(+). Its pathway is nitrogen metabolism; urea degradation; CO(2) and NH(3) from urea (urease route): step 1/1. This chain is Urease subunit beta, found in Rhodopseudomonas palustris (strain ATCC BAA-98 / CGA009).